Consider the following 129-residue polypeptide: C-phycocyanin beta subunit (129 aa).

N4-methylasparagine is present on Asn62. Cys116 is a binding site for (2R,3E)-phycocyanobilin.

Belongs to the phycobiliprotein family. Heterodimer of an alpha and a beta subunit, which further assembles into trimers and the trimers into hexamers. Post-translationally, two isomers exist. Contains two covalently linked bilin chromophores.

The protein localises to the cellular thylakoid membrane. Functionally, light-harvesting photosynthetic bile pigment-protein from the phycobiliprotein complex (phycobilisome, PBS). Phycocyanin is the major phycobiliprotein in the PBS rod. This is C-phycocyanin beta subunit from Aphanizomenon flos-aquae.